A 95-amino-acid polypeptide reads, in one-letter code: Aspartyl/glutamyl-tRNA(Asn/Gln) amidotransferase subunit C (95 aa).

This sequence belongs to the GatC family. As to quaternary structure, heterotrimer of A, B and C subunits.

It catalyses the reaction L-glutamyl-tRNA(Gln) + L-glutamine + ATP + H2O = L-glutaminyl-tRNA(Gln) + L-glutamate + ADP + phosphate + H(+). The catalysed reaction is L-aspartyl-tRNA(Asn) + L-glutamine + ATP + H2O = L-asparaginyl-tRNA(Asn) + L-glutamate + ADP + phosphate + 2 H(+). Allows the formation of correctly charged Asn-tRNA(Asn) or Gln-tRNA(Gln) through the transamidation of misacylated Asp-tRNA(Asn) or Glu-tRNA(Gln) in organisms which lack either or both of asparaginyl-tRNA or glutaminyl-tRNA synthetases. The reaction takes place in the presence of glutamine and ATP through an activated phospho-Asp-tRNA(Asn) or phospho-Glu-tRNA(Gln). This chain is Aspartyl/glutamyl-tRNA(Asn/Gln) amidotransferase subunit C, found in Pseudomonas putida (strain ATCC 700007 / DSM 6899 / JCM 31910 / BCRC 17059 / LMG 24140 / F1).